Reading from the N-terminus, the 652-residue chain is DNA ligase (652 aa).

NAD(+) contacts are provided by residues 29-33 (DSEYD), 78-79 (SL), and Glu-107. Lys-109 functions as the N6-AMP-lysine intermediate in the catalytic mechanism. Positions 130, 164, 278, and 302 each coordinate NAD(+). Residues Cys-395, Cys-398, Cys-413, and Cys-418 each coordinate Zn(2+). The BRCT domain maps to 577–652 (VADAALSGLT…VRDEAWLESL (76 aa)).

The protein belongs to the NAD-dependent DNA ligase family. LigA subfamily. The cofactor is Mg(2+). It depends on Mn(2+) as a cofactor.

The enzyme catalyses NAD(+) + (deoxyribonucleotide)n-3'-hydroxyl + 5'-phospho-(deoxyribonucleotide)m = (deoxyribonucleotide)n+m + AMP + beta-nicotinamide D-nucleotide.. Functionally, DNA ligase that catalyzes the formation of phosphodiester linkages between 5'-phosphoryl and 3'-hydroxyl groups in double-stranded DNA using NAD as a coenzyme and as the energy source for the reaction. It is essential for DNA replication and repair of damaged DNA. The sequence is that of DNA ligase from Streptococcus pneumoniae (strain Taiwan19F-14).